Reading from the N-terminus, the 212-residue chain is Non-structural protein 5 (212 aa).

Aspartate 86 lines the Mg(2+) pocket.

This sequence belongs to the rotavirus NSP5 family. As to quaternary structure, homodimer. Interacts with VP1. Interacts with VP2. Interacts with NSP2 and NSP6. The cofactor is Mg(2+). O-glycosylated.

The protein resides in the host cytoplasm. In terms of biological role, plays an essential role in the viral genome replication. Participates, together with NSP2, in the formation of viral factories (viroplasms) which are large inclusions in the host cytoplasm where replication intermediates are assembled and viral RNA replication takes place. Orchestrates the recruitment of viroplasmic proteins such as capsid proteins to these factories. This is Non-structural protein 5 from Homo sapiens (Human).